A 330-amino-acid chain; its full sequence is Phosphatidylglycerol--prolipoprotein diacylglyceryl transferase (330 aa).

3 helical membrane passes run 22-42 (LPIRAYALLIILGIVAALVVG), 57-77 (YDIALWAVPFGLVGGRLYHLA), and 97-117 (IWDGGLGIWGAVALGCVGAWL). Arg-145 is a binding site for a 1,2-diacyl-sn-glycero-3-phospho-(1'-sn-glycerol). The next 2 membrane-spanning stretches (helical) occupy residues 193 to 213 (VVQPTFLYELIWNVLVFFALI) and 257 to 277 (INSFTSTFVFIGAVVYIILAP).

Belongs to the Lgt family.

It localises to the cell membrane. It carries out the reaction L-cysteinyl-[prolipoprotein] + a 1,2-diacyl-sn-glycero-3-phospho-(1'-sn-glycerol) = an S-1,2-diacyl-sn-glyceryl-L-cysteinyl-[prolipoprotein] + sn-glycerol 1-phosphate + H(+). Its pathway is protein modification; lipoprotein biosynthesis (diacylglyceryl transfer). Functionally, catalyzes the transfer of the diacylglyceryl group from phosphatidylglycerol to the sulfhydryl group of the N-terminal cysteine of a prolipoprotein, the first step in the formation of mature lipoproteins. In Mycobacterium leprae (strain Br4923), this protein is Phosphatidylglycerol--prolipoprotein diacylglyceryl transferase.